A 448-amino-acid polypeptide reads, in one-letter code: N-succinylarginine dihydrolase (448 aa).

Residues 19–28, asparagine 110, and 137–138 contribute to the substrate site; these read GGLSYGNVAS and HR. Glutamate 174 is a catalytic residue. Arginine 214 contributes to the substrate binding site. Histidine 250 is an active-site residue. Aspartate 252 and asparagine 365 together coordinate substrate. Cysteine 371 functions as the Nucleophile in the catalytic mechanism.

This sequence belongs to the succinylarginine dihydrolase family. In terms of assembly, homodimer.

The enzyme catalyses N(2)-succinyl-L-arginine + 2 H2O + 2 H(+) = N(2)-succinyl-L-ornithine + 2 NH4(+) + CO2. It functions in the pathway amino-acid degradation; L-arginine degradation via AST pathway; L-glutamate and succinate from L-arginine: step 2/5. Functionally, catalyzes the hydrolysis of N(2)-succinylarginine into N(2)-succinylornithine, ammonia and CO(2). This is N-succinylarginine dihydrolase from Ectopseudomonas mendocina (strain ymp) (Pseudomonas mendocina).